The primary structure comprises 562 residues: Potassium-transporting ATPase potassium-binding subunit (562 aa).

The next 12 helical transmembrane spans lie at 6 to 26 (FLLI…LGGF), 62 to 82 (YALA…VLLM), 132 to 152 (GLTV…FALI), 175 to 195 (LYVL…QGVL), 253 to 273 (FVQM…FGQV), 283 to 303 (LIWA…YAEL), 327 to 347 (FGIL…CGAV), 356 to 376 (ALGG…FGGV), 379 to 399 (GLYG…LMIG), 416 to 436 (MTAL…ALAL), 483 to 503 (LLLA…VLAI), and 524 to 544 (GLLF…LTFI).

It belongs to the KdpA family. In terms of assembly, the system is composed of three essential subunits: KdpA, KdpB and KdpC.

The protein resides in the cell inner membrane. Part of the high-affinity ATP-driven potassium transport (or Kdp) system, which catalyzes the hydrolysis of ATP coupled with the electrogenic transport of potassium into the cytoplasm. This subunit binds the periplasmic potassium ions and delivers the ions to the membrane domain of KdpB through an intramembrane tunnel. This chain is Potassium-transporting ATPase potassium-binding subunit, found in Yersinia pestis bv. Antiqua (strain Antiqua).